The primary structure comprises 172 residues: Protein-export protein SecB (172 aa).

Positions 152–172 (AQGAEGGNSGIVMPDGSQARH) are disordered.

Belongs to the SecB family. Homotetramer, a dimer of dimers. One homotetramer interacts with 1 SecA dimer.

Its subcellular location is the cytoplasm. Its function is as follows. One of the proteins required for the normal export of preproteins out of the cell cytoplasm. It is a molecular chaperone that binds to a subset of precursor proteins, maintaining them in a translocation-competent state. It also specifically binds to its receptor SecA. The polypeptide is Protein-export protein SecB (Cupriavidus taiwanensis (strain DSM 17343 / BCRC 17206 / CCUG 44338 / CIP 107171 / LMG 19424 / R1) (Ralstonia taiwanensis (strain LMG 19424))).